The chain runs to 515 residues: Maturase K (515 aa).

The protein belongs to the intron maturase 2 family. MatK subfamily.

It is found in the plastid. The protein localises to the chloroplast. Its function is as follows. Usually encoded in the trnK tRNA gene intron. Probably assists in splicing its own and other chloroplast group II introns. The sequence is that of Maturase K from Pinus uncinata (Mountain pine).